Here is a 515-residue protein sequence, read N- to C-terminus: 2-isopropylmalate synthase (515 aa).

In terms of domain architecture, Pyruvate carboxyltransferase spans 5–268 (VIIFDTTLRD…VCGIDASQIV (264 aa)). Mn(2+) contacts are provided by D14, H202, H204, and N239. A regulatory domain region spans residues 394–515 (HFISLSQHSE…QAKLNAQMAP (122 aa)).

The protein belongs to the alpha-IPM synthase/homocitrate synthase family. LeuA type 1 subfamily. As to quaternary structure, homodimer. The cofactor is Mn(2+).

It localises to the cytoplasm. It catalyses the reaction 3-methyl-2-oxobutanoate + acetyl-CoA + H2O = (2S)-2-isopropylmalate + CoA + H(+). The protein operates within amino-acid biosynthesis; L-leucine biosynthesis; L-leucine from 3-methyl-2-oxobutanoate: step 1/4. Catalyzes the condensation of the acetyl group of acetyl-CoA with 3-methyl-2-oxobutanoate (2-ketoisovalerate) to form 3-carboxy-3-hydroxy-4-methylpentanoate (2-isopropylmalate). The sequence is that of 2-isopropylmalate synthase from Polynucleobacter asymbioticus (strain DSM 18221 / CIP 109841 / QLW-P1DMWA-1) (Polynucleobacter necessarius subsp. asymbioticus).